Here is a 681-residue protein sequence, read N- to C-terminus: MASGAPDGKWKVVKKGKKSGEKGGGRKALSESNVTPGGTAPIKMANTVYEMGFEQILKKQNKEQVPPNNIPAEQPQKKQQQQQNPGRKKPQSGDTGSRQRKFHTLEEGLKALDLAELQRELEKSQNMFPESPSIWVKDLAGYLNYKLQTVKNDVLIQQSHDYPYCLVNKELKGIVRSLLAKAPHVLDVMVDHCIFSMFQELDKPTGESLHGYRICLQAVLLDKPKTVTNNLPKYLELLRSQVNRPMKCLAVMWAVGQAGFTDLSEGLKVWLGLMFPVLGVKTLTPYAILYLDRLLLAHSNLTKGFGMIGPKDFFPLLDFAFMPNNSLTSSQQENLRNLYPRLKVLAFGATPESTLHTYFPSFLSRVTPSCPAEMRKELINSLTDCLNKDPLSFSVWRQLYTKHLSQSSFLLQHLVETWDSNSKAMRKSVRETVHSFKVTNGEFSGKGSSLKDLEACDAACQALLHKMKGSGFPWRRLIVIAFVFLFGFVFYDVRTHNSFQASTSHKVLQQSGLLSVSQQAWSKVSNYSLQGQSWLERNVPQYYSQAVEVLGPVLEQVWAKTQEGAAYACEKGSVLITYTKDNLPRLIEWLHSHTPDSVCQFIEYLRELLLHLHRTYLLPAVTYLEAAVQNAWQQYVASCNGKVTWDCVRGQVSNISHSSWTYLQNTTMTVTNWALSIISHH.

Disordered stretches follow at residues 1 to 41 and 58 to 99; these read MASG…GTAP and KKQN…GSRQ. Asn300 and Asn324 each carry an N-linked (GlcNAc...) asparagine glycan. 2 helical membrane-spanning segments follow: residues 471–491 and 608–628; these read GFPWRRLIVIAFVFLFGFVFY and LLLHLHRTYLLPAVTYLEAAV.

It belongs to the TMEM214 family. Constitutively interacts with CASP4; required for the localization of procaspase 4 to the ER.

The protein localises to the endoplasmic reticulum membrane. In terms of biological role, critical mediator, in cooperation with CASP4, of endoplasmic reticulum-stress induced apoptosis. Required or the activation of CASP4 following endoplasmic reticulum stress. The chain is Transmembrane protein 214-A (tmem214-a) from Xenopus laevis (African clawed frog).